A 223-amino-acid chain; its full sequence is Type III pantothenate kinase (223 aa).

17-24 (DIGNTHIH) contributes to the ATP binding site. Substrate contacts are provided by residues Tyr-81 and 85–88 (GIDR). The Proton acceptor role is filled by Asp-87. Residue Asp-102 participates in K(+) binding. Ser-105 is an ATP binding site. Thr-157 lines the substrate pocket.

Belongs to the type III pantothenate kinase family. In terms of assembly, homodimer. NH4(+) is required as a cofactor. It depends on K(+) as a cofactor.

It localises to the cytoplasm. The catalysed reaction is (R)-pantothenate + ATP = (R)-4'-phosphopantothenate + ADP + H(+). The protein operates within cofactor biosynthesis; coenzyme A biosynthesis; CoA from (R)-pantothenate: step 1/5. Catalyzes the phosphorylation of pantothenate (Pan), the first step in CoA biosynthesis. This Helicobacter pylori (strain HPAG1) protein is Type III pantothenate kinase.